The following is a 511-amino-acid chain: Histidine ammonia-lyase (511 aa).

The 5-imidazolinone (Ala-Gly) cross-link spans 142 to 144 (ASG). At Ser-143 the chain carries 2,3-didehydroalanine (Ser).

The protein belongs to the PAL/histidase family. In terms of processing, contains an active site 4-methylidene-imidazol-5-one (MIO), which is formed autocatalytically by cyclization and dehydration of residues Ala-Ser-Gly.

The protein localises to the cytoplasm. It catalyses the reaction L-histidine = trans-urocanate + NH4(+). It functions in the pathway amino-acid degradation; L-histidine degradation into L-glutamate; N-formimidoyl-L-glutamate from L-histidine: step 1/3. This chain is Histidine ammonia-lyase, found in Brucella suis (strain ATCC 23445 / NCTC 10510).